The primary structure comprises 245 residues: 4-hydroxy-tetrahydrodipicolinate reductase (245 aa).

NAD(+) contacts are provided by residues 7 to 12, 75 to 77, and 102 to 105; these read GAKGKV, GTT, and APNF. Histidine 132 serves as the catalytic Proton donor/acceptor. Histidine 133 lines the (S)-2,3,4,5-tetrahydrodipicolinate pocket. Lysine 136 serves as the catalytic Proton donor. 142–143 is a binding site for (S)-2,3,4,5-tetrahydrodipicolinate; the sequence is GT.

The protein belongs to the DapB family.

It localises to the cytoplasm. It catalyses the reaction (S)-2,3,4,5-tetrahydrodipicolinate + NAD(+) + H2O = (2S,4S)-4-hydroxy-2,3,4,5-tetrahydrodipicolinate + NADH + H(+). It carries out the reaction (S)-2,3,4,5-tetrahydrodipicolinate + NADP(+) + H2O = (2S,4S)-4-hydroxy-2,3,4,5-tetrahydrodipicolinate + NADPH + H(+). It participates in amino-acid biosynthesis; L-lysine biosynthesis via DAP pathway; (S)-tetrahydrodipicolinate from L-aspartate: step 4/4. Its function is as follows. Catalyzes the conversion of 4-hydroxy-tetrahydrodipicolinate (HTPA) to tetrahydrodipicolinate. This is 4-hydroxy-tetrahydrodipicolinate reductase from Mycobacterium marinum (strain ATCC BAA-535 / M).